Reading from the N-terminus, the 20-residue chain is Alpha-conotoxin-like ts14a (20 aa).

2 disulfides stabilise this stretch: Cys3/Cys16 and Cys14/Cys20.

In terms of tissue distribution, expressed by the venom duct.

The protein resides in the secreted. Alpha-conotoxins act on postsynaptic membranes, they bind to the nicotinic acetylcholine receptors (nAChR) and thus inhibit them. In Conus tessulatus (Tessellate cone), this protein is Alpha-conotoxin-like ts14a.